Reading from the N-terminus, the 189-residue chain is uncharacterized protein (189 aa).

This sequence belongs to the mimivirus R457/R459 family.

The protein resides in the virion. This is an uncharacterized protein from Acanthamoeba polyphaga mimivirus (APMV).